The sequence spans 180 residues: Acireductone dioxygenase (180 aa).

His-97, His-99, Glu-103, and His-141 together coordinate Fe(2+). His-97, His-99, Glu-103, and His-141 together coordinate Ni(2+).

It belongs to the acireductone dioxygenase (ARD) family. Monomer. Fe(2+) serves as cofactor. The cofactor is Ni(2+).

The catalysed reaction is 1,2-dihydroxy-5-(methylsulfanyl)pent-1-en-3-one + O2 = 3-(methylsulfanyl)propanoate + CO + formate + 2 H(+). The enzyme catalyses 1,2-dihydroxy-5-(methylsulfanyl)pent-1-en-3-one + O2 = 4-methylsulfanyl-2-oxobutanoate + formate + 2 H(+). It functions in the pathway amino-acid biosynthesis; L-methionine biosynthesis via salvage pathway; L-methionine from S-methyl-5-thio-alpha-D-ribose 1-phosphate: step 5/6. In terms of biological role, catalyzes 2 different reactions between oxygen and the acireductone 1,2-dihydroxy-3-keto-5-methylthiopentene (DHK-MTPene) depending upon the metal bound in the active site. Fe-containing acireductone dioxygenase (Fe-ARD) produces formate and 2-keto-4-methylthiobutyrate (KMTB), the alpha-ketoacid precursor of methionine in the methionine recycle pathway. Ni-containing acireductone dioxygenase (Ni-ARD) produces methylthiopropionate, carbon monoxide and formate, and does not lie on the methionine recycle pathway. The polypeptide is Acireductone dioxygenase (Enterobacter sp. (strain 638)).